The sequence spans 119 residues: MIARRNPEPLRFLPDEARSLPPPKLTDPRLLYIGFLGYCSGLIDNLIRRRPVATAGLHRQLLYITAFFFAGYYLVKREDYLYAVRDREMFGYMKLHPEDFPEEDKKTYGEIFEKFHPIR.

A helical membrane pass occupies residues 56 to 75; that stretch reads GLHRQLLYITAFFFAGYYLV.

It belongs to the complex I NDUFC2 subunit family. Complex I is composed of 45 different subunits. Interacts with TMEM242.

The protein resides in the mitochondrion inner membrane. Accessory subunit of the mitochondrial membrane respiratory chain NADH dehydrogenase (Complex I), that is believed not to be involved in catalysis but required for the complex assembly. Complex I functions in the transfer of electrons from NADH to the respiratory chain. The immediate electron acceptor for the enzyme is believed to be ubiquinone. In Pan troglodytes (Chimpanzee), this protein is NADH dehydrogenase [ubiquinone] 1 subunit C2.